The following is a 182-amino-acid chain: MTFEQLIPLIIMAFALGMDAFSVSLGMGMMTLKIRQILYIGVTIGIFHIIMPFIGMVLGRFLSEQYGDIAHFAGAILLIGLGFYIVYSSILENEETRTAPIGISLFVFAFGVSIDSFSVGLSLGIYGAQTIITILLFGFVSMLLAWIGLFIGRHAKDMLGTYGEIVGGIILVGFGLYLLFPI.

A run of 6 helical transmembrane segments spans residues 6 to 26 (LIPL…VSLG), 37 to 57 (ILYI…IGMV), 71 to 91 (HFAG…SSIL), 101 to 121 (IGIS…SVGL), 131 to 151 (IITI…GLFI), and 162 to 182 (YGEI…LFPI).

This sequence belongs to the MntP (TC 9.B.29) family.

It is found in the cell membrane. Probably functions as a manganese efflux pump. In Bacillus cereus (strain ATCC 10987 / NRS 248), this protein is Putative manganese efflux pump MntP.